A 671-amino-acid polypeptide reads, in one-letter code: DNA ligase (671 aa).

NAD(+) is bound by residues 31-35 (DAEYD), 80-81 (SL), and Glu110. The active-site N6-AMP-lysine intermediate is the Lys112. Arg133, Glu167, Lys283, and Lys307 together coordinate NAD(+). Residues Cys401, Cys404, Cys419, and Cys424 each contribute to the Zn(2+) site. The 85-residue stretch at 587–671 (EEELVFAGKT…YLPDEGGLNE (85 aa)) folds into the BRCT domain.

This sequence belongs to the NAD-dependent DNA ligase family. LigA subfamily. Mg(2+) serves as cofactor. Mn(2+) is required as a cofactor.

The catalysed reaction is NAD(+) + (deoxyribonucleotide)n-3'-hydroxyl + 5'-phospho-(deoxyribonucleotide)m = (deoxyribonucleotide)n+m + AMP + beta-nicotinamide D-nucleotide.. In terms of biological role, DNA ligase that catalyzes the formation of phosphodiester linkages between 5'-phosphoryl and 3'-hydroxyl groups in double-stranded DNA using NAD as a coenzyme and as the energy source for the reaction. It is essential for DNA replication and repair of damaged DNA. This chain is DNA ligase, found in Listeria innocua serovar 6a (strain ATCC BAA-680 / CLIP 11262).